We begin with the raw amino-acid sequence, 327 residues long: Fumigatonoid B endoperoxide isomerase nvfE (327 aa).

The disordered stretch occupies residues 1-22 (MGRDQVSHKRSQNSNVSEIPDL). Positions 152, 154, and 234 each coordinate Fe cation.

The protein belongs to the PhyH family. In terms of assembly, homodimer. Fe cation serves as cofactor.

It catalyses the reaction fumigatonoid B = fumigatonoid C. The protein operates within secondary metabolite biosynthesis; terpenoid biosynthesis. In terms of biological role, fumigatonoid B endoperoxide isomerase; part of the gene cluster that mediates the biosynthesis of novofumigatonin, a heavily oxygenated meroterpenoid containing a unique orthoester moiety. The first step of the pathway is the synthesis of 3,5-dimethylorsellinic acid (DMOA) by the polyketide synthase nvfA via condensation of one acetyl-CoA starter unit with 3 malonyl-CoA units and 2 methylations. DMOA is then converted to farnesyl-DMOA by the farnesyltransferase nvfB. Epoxydation by FAD-dependent monooxygenase nvfK, followed by a protonation-initiated cyclization catalyzed by the terpene cyclase nvfL leads to the production of asnavolin H. The short chain dehydrogenase nvfC then as a 3-OH dehydrogenase of asnovolin H to yield chemesin D. There are two branches to synthesize asnovolin A from chemesin D. In one branch, chemesin D undergoes Baeyer-Villiger oxidation by nvfH, methylation by nvfJ, and enoyl reduction by the nvfM D enoylreductase that reduces the double bond between C-5'and C-6', to form respectively asnovolin I, asnovolin K, and asnovolin A. In the other branch, the methylation precedes the Baeyer-Villiger oxidation and the enoyl reduction to yield asnovolin A via the asnovolin J intermediate. Asnovolin A is further converted to fumigatonoid A by the Fe(II)/2-oxoglutarate-dependent dioxygenase nvfI that catalyzes an endoperoxidation reaction. The alpha/beta hydrolase nvfD then acts as an epimerase that converts fumigatonoid A to its C-5' epimer, which then undergoes spontaneous or nvfD-catalyzed lactonization. The following step utilizes the ketoreductase nvfG to produce fumigatonoid B. The dioxygenase nvfE further converts fumigatonoid B into fumigatonoid C. Finally the Fe(II)/2-oxoglutarate-dependent dioxygenase nvfF catalyzes two rounds of oxidation to transform fumigatonoid C into the end product, novofumigatonin A. The chain is Fumigatonoid B endoperoxide isomerase nvfE from Aspergillus novofumigatus (strain IBT 16806).